The chain runs to 292 residues: Elongation factor Ts (292 aa).

Positions 82–85 are involved in Mg(2+) ion dislocation from EF-Tu; the sequence is TDFV.

The protein belongs to the EF-Ts family.

It is found in the cytoplasm. Functionally, associates with the EF-Tu.GDP complex and induces the exchange of GDP to GTP. It remains bound to the aminoacyl-tRNA.EF-Tu.GTP complex up to the GTP hydrolysis stage on the ribosome. This is Elongation factor Ts from Legionella pneumophila subsp. pneumophila (strain Philadelphia 1 / ATCC 33152 / DSM 7513).